Here is a 463-residue protein sequence, read N- to C-terminus: MDFLPLFCQLQHKPVLIVGGGEVAVRKARLLLDAKARVTINAPHLEPQLMSWAEQGLLTVCAADFHPELLDGKWLVIAATNQPEVNQQVFNEANRRQIFCNVVDSPAHCSAIMPAIIDRSPLMVAISSAGSAPLLSRQLREKIEALLPQHLGQLATLAGKLRERVKAIPDKLARRRFWERLFSHERLACQLARGQQQAAEESVAELLNEPQQSKGSVTLVGAGPGDAGLLTLNGLQQLQQADVVVYDRLVSQEVLAHVRRDAERIFVGKEAGCHCVPQQAINQLLLEQARLGKQVVRLKGGDPFIFGRGGEELETLAEAGIPFSVVPGITAASGCAAYSGIPLTHRDHAQRVQFITGHDKEGNIAQEWPALATPRQTLVFYMGLAHAGRIQDELQTHGLPGHTPVALVEQGTRLQQRVVRGKLQQLAQLATQVESPSLIIIGSVVTLADKLDWYGEANTLAGV.

Residues 1–203 (MDFLPLFCQL…GQQQAAEESV (203 aa)) form a precorrin-2 dehydrogenase /sirohydrochlorin ferrochelatase region. Residues 22–23 (EV) and 43–44 (PH) each bind NAD(+). At serine 128 the chain carries Phosphoserine. The segment at 215–463 (GSVTLVGAGP…YGEANTLAGV (249 aa)) is uroporphyrinogen-III C-methyltransferase. Proline 224 is an S-adenosyl-L-methionine binding site. The active-site Proton acceptor is aspartate 247. Lysine 269 (proton donor) is an active-site residue. S-adenosyl-L-methionine contacts are provided by residues 300–302 (GGD), isoleucine 305, 330–331 (TA), methionine 382, and glycine 411.

The protein in the N-terminal section; belongs to the precorrin-2 dehydrogenase / sirohydrochlorin ferrochelatase family. This sequence in the C-terminal section; belongs to the precorrin methyltransferase family.

It carries out the reaction uroporphyrinogen III + 2 S-adenosyl-L-methionine = precorrin-2 + 2 S-adenosyl-L-homocysteine + H(+). The enzyme catalyses precorrin-2 + NAD(+) = sirohydrochlorin + NADH + 2 H(+). The catalysed reaction is siroheme + 2 H(+) = sirohydrochlorin + Fe(2+). It functions in the pathway cofactor biosynthesis; adenosylcobalamin biosynthesis; precorrin-2 from uroporphyrinogen III: step 1/1. It participates in cofactor biosynthesis; adenosylcobalamin biosynthesis; sirohydrochlorin from precorrin-2: step 1/1. The protein operates within porphyrin-containing compound metabolism; siroheme biosynthesis; precorrin-2 from uroporphyrinogen III: step 1/1. Its pathway is porphyrin-containing compound metabolism; siroheme biosynthesis; siroheme from sirohydrochlorin: step 1/1. It functions in the pathway porphyrin-containing compound metabolism; siroheme biosynthesis; sirohydrochlorin from precorrin-2: step 1/1. Functionally, multifunctional enzyme that catalyzes the SAM-dependent methylations of uroporphyrinogen III at position C-2 and C-7 to form precorrin-2 via precorrin-1. Then it catalyzes the NAD-dependent ring dehydrogenation of precorrin-2 to yield sirohydrochlorin. Finally, it catalyzes the ferrochelation of sirohydrochlorin to yield siroheme. This chain is Siroheme synthase 1, found in Aeromonas hydrophila subsp. hydrophila (strain ATCC 7966 / DSM 30187 / BCRC 13018 / CCUG 14551 / JCM 1027 / KCTC 2358 / NCIMB 9240 / NCTC 8049).